A 413-amino-acid chain; its full sequence is Peptidase T (413 aa).

Histidine 82 lines the Zn(2+) pocket. Residue aspartate 84 is part of the active site. A Zn(2+)-binding site is contributed by aspartate 144. The active-site Proton acceptor is the glutamate 178. Positions 179, 201, and 383 each coordinate Zn(2+).

It belongs to the peptidase M20B family. In terms of assembly, homotrimer. Zn(2+) serves as cofactor.

The protein resides in the cytoplasm. It carries out the reaction Release of the N-terminal residue from a tripeptide.. Totally inhibited by EDTA, EGTA, and 1,10-phenanthroline. Strongly inhibited by divalent cations such as Cu(2+), Cd(2+), Co(2+) and Mn(2+). Partially inhibited by the reducing agents 2-mercaptoethanol and dithiothreitol. Cleaves the N-terminal amino acid of tripeptides. Shows broad substrate specificity, exhibiting maximum activity against hydrophobic tripeptides, with the highest activity for Met-Gly-Gly. Therefore this enzyme may play an important role in flavor formation during cheese ripening. Is also able to slowly hydrolyze some hydrophobic dipeptides, but displays no activity against tetrapeptides and the tripeptide Phe-Gly-Gly. The protein is Peptidase T (pepT) of Lactobacillus helveticus (Lactobacillus suntoryeus).